A 333-amino-acid chain; its full sequence is Ornithine carbamoyltransferase (333 aa).

Carbamoyl phosphate contacts are provided by residues Ser56–Thr59, Arg107, and His134–Gln137. Residues Asn167, Asp231, and Ser235 to Met236 each bind L-ornithine. Residues Cys273–Leu274 and Arg318 contribute to the carbamoyl phosphate site.

It belongs to the aspartate/ornithine carbamoyltransferase superfamily. OTCase family.

It is found in the cytoplasm. It catalyses the reaction carbamoyl phosphate + L-ornithine = L-citrulline + phosphate + H(+). It participates in amino-acid degradation; L-arginine degradation via ADI pathway; carbamoyl phosphate from L-arginine: step 2/2. Its function is as follows. Reversibly catalyzes the transfer of the carbamoyl group from carbamoyl phosphate (CP) to the N(epsilon) atom of ornithine (ORN) to produce L-citrulline. This is Ornithine carbamoyltransferase from Clostridium botulinum (strain Langeland / NCTC 10281 / Type F).